Consider the following 61-residue polypeptide: MAIAPITGTLKRKIITDISIGFACGFALATGYWYIEHKPLIVKREAYYAKLKAQQEAEDSA.

Topologically, residues 1–13 (MAIAPITGTLKRK) are mitochondrial matrix. Residues 14 to 36 (IITDISIGFACGFALATGYWYIE) form a helical membrane-spanning segment. Residues 37–56 (HKPLIVKREAYYAKLKAQQE) are Mitochondrial intermembrane-facing. A propeptide spans 57–61 (AEDSA) (removed in mature form).

Belongs to the fungal cytochrome c oxidase subunit 7a family. In terms of assembly, component of the cytochrome c oxidase (complex IV, CIV), a multisubunit enzyme composed of a catalytic core of 3 subunits and several supernumerary subunits. The complex exists as a monomer or a dimer and forms supercomplexes (SCs) in the inner mitochondrial membrane with ubiquinol-cytochrome c oxidoreductase (cytochrome b-c1 complex, complex III, CIII).

It localises to the mitochondrion inner membrane. It participates in energy metabolism; oxidative phosphorylation. Component of the cytochrome c oxidase, the last enzyme in the mitochondrial electron transport chain which drives oxidative phosphorylation. The respiratory chain contains 3 multisubunit complexes succinate dehydrogenase (complex II, CII), ubiquinol-cytochrome c oxidoreductase (cytochrome b-c1 complex, complex III, CIII) and cytochrome c oxidase (complex IV, CIV), that cooperate to transfer electrons derived from NADH and succinate to molecular oxygen, creating an electrochemical gradient over the inner membrane that drives transmembrane transport and the ATP synthase. Cytochrome c oxidase is the component of the respiratory chain that catalyzes the reduction of oxygen to water. Electrons originating from reduced cytochrome c in the intermembrane space (IMS) are transferred via the dinuclear copper A center (CU(A)) of subunit 2 and heme A of subunit 1 to the active site in subunit 1, a binuclear center (BNC) formed by heme A3 and copper B (CU(B)). The BNC reduces molecular oxygen to 2 water molecules using 4 electrons from cytochrome c in the IMS and 4 protons from the mitochondrial matrix. This chain is Cytochrome c oxidase subunit 9, mitochondrial (COX9), found in Debaryomyces hansenii (strain ATCC 36239 / CBS 767 / BCRC 21394 / JCM 1990 / NBRC 0083 / IGC 2968) (Yeast).